The following is a 586-amino-acid chain: Pyruvate kinase (586 aa).

Arg-32 lines the substrate pocket. K(+)-binding residues include Asn-34, Ser-36, Asp-66, and Thr-67. ATP is bound at residue 34–37 (NFSH). The ATP site is built by Arg-73 and Lys-156. Glu-222 contacts Mg(2+). Residues Gly-245, Asp-246, and Thr-278 each coordinate substrate. Residue Asp-246 coordinates Mg(2+).

Belongs to the pyruvate kinase family. This sequence in the C-terminal section; belongs to the PEP-utilizing enzyme family. The cofactor is Mg(2+). It depends on K(+) as a cofactor.

The enzyme catalyses pyruvate + ATP = phosphoenolpyruvate + ADP + H(+). The protein operates within carbohydrate degradation; glycolysis; pyruvate from D-glyceraldehyde 3-phosphate: step 5/5. In Staphylococcus haemolyticus (strain JCSC1435), this protein is Pyruvate kinase (pyk).